We begin with the raw amino-acid sequence, 425 residues long: Peroxisomal membrane protein PEX14 (425 aa).

2 disordered regions span residues 49-89 and 247-425; these read RSQG…YRNA and DEPI…AAQS. Low complexity predominate over residues 56-76; it reads SSSVASQVSSYSPSASQSSVA. The short motif at 89–97 is the SH3-binding element; that stretch reads APPLPERDW. The segment covering 256-297 has biased composition (polar residues); that stretch reads PSLTTGANSLTSESSGRSSIPHSQSVPIRTQLTTPPSDSDTS. Basic and acidic residues-rich tracts occupy residues 315-324 and 333-366; these read DILRKEKNRT and LGKDLESVAQSDPDKVEKYEGRRDLKSLERPEED.

Belongs to the peroxin-14 family. In terms of assembly, interacts with PEX13 (via SH3 domain); forming the PEX13-PEX14 docking complex. Interacts with PEX5 (via WxxxF/Y motifs). Interacts with PEX20 (via WxxxF/Y motifs). Interacts with PEX3, PEX7, PEX8 and PEX17. In terms of processing, phosphorylated on serine or threonine residues.

It localises to the peroxisome membrane. Functionally, component of the PEX13-PEX14 docking complex, a translocon channel that specifically mediates the import of peroxisomal cargo proteins bound to PEX5 or PEX20 receptors. The PEX13-PEX14 docking complex forms a large import pore which can be opened to a diameter of about 9 nm. Mechanistically, PEX5 (or PEX20) receptor along with cargo proteins associates with the PEX14 subunit of the PEX13-PEX14 docking complex in the cytosol, leading to the insertion of the receptor into the organelle membrane with the concomitant translocation of the cargo into the peroxisome matrix. The chain is Peroxisomal membrane protein PEX14 from Komagataella pastoris (Yeast).